Reading from the N-terminus, the 298-residue chain is ATP synthase gamma chain (298 aa).

The protein belongs to the ATPase gamma chain family. In terms of assembly, F-type ATPases have 2 components, CF(1) - the catalytic core - and CF(0) - the membrane proton channel. CF(1) has five subunits: alpha(3), beta(3), gamma(1), delta(1), epsilon(1). CF(0) has three main subunits: a, b and c.

Its subcellular location is the cell inner membrane. In terms of biological role, produces ATP from ADP in the presence of a proton gradient across the membrane. The gamma chain is believed to be important in regulating ATPase activity and the flow of protons through the CF(0) complex. The protein is ATP synthase gamma chain of Francisella tularensis subsp. mediasiatica (strain FSC147).